The following is a 752-amino-acid chain: MGIKVQRPRCFFDIAINNQPAGRVVFELFSDVCPKTCENFRCLCTGEKGTGKSTQKPLHYKSCLFHRVVKDFMVQGGDFSEGNGRGGESIYGGFFEDESFAVKHNKEFLLSMANRGKDTNGSQFFITTKPTPHLDGHHVVFGQVISGQEVVREIENQKTDAASKPFAEVRILSCGELVPKSKVKKEEKKRHKSSSSSSSSDSDSSSDSQSSSDSSDSESASEEKSRKRKKKHRKNSRKHKKEKKKRKKSKKSPSSESEADNVDAQPQSTVRPEEIPPIPENRFLMRKSPPKADDKERKNRERERERECNPPNSQPASYQRRFLVTRFGRKIKGRGPRRYRTPSRSRSRDRFRRSETPPHWRQEMQRAQRMRVSSGERWIKGDKSELNEIKENQRSPVRVKEKKITDHRHMSESPNRKIEKEKKVKDHKSESKERDIRRNSEKDDKYNKNKVKKRGKSKSRSKSKERSKSKERDSKHSRHEDKRVRSRSKERDHETTKEKEKQLDSKGKDQERSRSKENSKQVESKSNEHDHSKSKEKDRRAQSRSRERDLTKSKHSYNSRTRERSRSRDRSRRVRSRSHDRDRSRSKEYHRYREQEYRRRGRSRSRDRRTPGRSRSKDRRRRRRDSRSSEREESQSRNKEKYRSQDSKSSHRKENSEGEKRMYSKSRDHSSSNNNREKKADIDQSPVSKTKQSSQDNEVKSSTLKNQEDEKTRSPVEKENQKSKGQENDHVHDKNKKCDHESSPGTDEDKSG.

In terms of domain architecture, PPIase cyclophilin-type spans 11–176; the sequence is FFDIAINNQP…AEVRILSCGE (166 aa). Positions 182-193 are enriched in basic residues; it reads KVKKEEKKRHKS. Positions 182–752 are disordered; it reads KVKKEEKKRH…SPGTDEDKSG (571 aa). Positions 194-214 are enriched in low complexity; it reads SSSSSSSDSDSSSDSQSSSDS. Over residues 226-251 the composition is skewed to basic residues; sequence RKRKKKHRKNSRKHKKEKKKRKKSKK. 5 positions are modified to phosphoserine: Ser-252, Ser-254, Ser-255, Ser-257, and Ser-288. Residues 290–308 are compositionally biased toward basic and acidic residues; that stretch reads PKADDKERKNREREREREC. Position 313 is a phosphoserine (Ser-313). Positions 327-345 are enriched in basic residues; the sequence is FGRKIKGRGPRRYRTPSRS. Basic and acidic residues-rich tracts occupy residues 346-366 and 377-447; these read RSRD…EMQR and RWIK…DKYN. Ser-354 carries the post-translational modification Phosphoserine. A Phosphothreonine modification is found at Thr-356. Ser-384 carries the phosphoserine modification. Residue Lys-390 forms a Glycyl lysine isopeptide (Lys-Gly) (interchain with G-Cter in SUMO2) linkage. Ser-395, Ser-411, and Ser-413 each carry phosphoserine. Basic residues predominate over residues 448–461; the sequence is KNKVKKRGKSKSRS. Composition is skewed to basic and acidic residues over residues 462–552 and 577–598; these read KSKE…DLTK and RSHD…QEYR. Over residues 599 to 625 the composition is skewed to basic residues; that stretch reads RRGRSRSRDRRTPGRSRSKDRRRRRRD. The span at 626–682 shows a compositional bias: basic and acidic residues; the sequence is SRSSEREESQSRNKEKYRSQDSKSSHRKENSEGEKRMYSKSRDHSSSNNNREKKADI. Phosphoserine occurs at positions 685 and 688. Residues 685 to 705 are compositionally biased toward polar residues; it reads SPVSKTKQSSQDNEVKSSTLK. A Glycyl lysine isopeptide (Lys-Gly) (interchain with G-Cter in SUMO2) cross-link involves residue Lys-691. A phosphoserine mark is found at Ser-694, Ser-742, and Ser-743. Residues 706-752 are compositionally biased toward basic and acidic residues; the sequence is NQEDEKTRSPVEKENQKSKGQENDHVHDKNKKCDHESSPGTDEDKSG. Thr-746 carries the post-translational modification Phosphothreonine. Ser-751 is modified (phosphoserine).

As to quaternary structure, interacts with CLK1, PNN and with the phosphorylated C-terminal domain of RNA polymerase II.

It is found in the nucleus matrix. Its subcellular location is the nucleus speckle. The catalysed reaction is [protein]-peptidylproline (omega=180) = [protein]-peptidylproline (omega=0). With respect to regulation, inhibited by cyclosporin A (CsA). PPIase that catalyzes the cis-trans isomerization of proline imidic peptide bonds in oligopeptides and may therefore assist protein folding. May be implicated in the folding, transport, and assembly of proteins. May play an important role in the regulation of pre-mRNA splicing. This is Peptidyl-prolyl cis-trans isomerase G (Ppig) from Rattus norvegicus (Rat).